Consider the following 799-residue polypeptide: Ribosome-releasing factor 2, mitochondrial (799 aa).

Positions 19–306 (SKIRNIGIIA…AVVNYLPSPL (288 aa)) constitute a tr-type G domain. Residues 28-35 (AHIDAGKT), 93-97 (DTPGH), and 145-148 (NKMD) each bind GTP.

It belongs to the TRAFAC class translation factor GTPase superfamily. Classic translation factor GTPase family. EF-G/EF-2 subfamily.

It is found in the mitochondrion. Mitochondrial GTPase that mediates the disassembly of ribosomes from messenger RNA at the termination of mitochondrial protein biosynthesis. Not involved in the GTP-dependent ribosomal translocation step during translation elongation. The chain is Ribosome-releasing factor 2, mitochondrial from Vanderwaltozyma polyspora (strain ATCC 22028 / DSM 70294 / BCRC 21397 / CBS 2163 / NBRC 10782 / NRRL Y-8283 / UCD 57-17) (Kluyveromyces polysporus).